Consider the following 134-residue polypeptide: Large ribosomal subunit protein uL18 (134 aa).

This sequence belongs to the universal ribosomal protein uL18 family. In terms of assembly, part of the 50S ribosomal subunit; part of the 5S rRNA/L5/L18/L25 subcomplex. Contacts the 5S and 23S rRNAs.

This is one of the proteins that bind and probably mediate the attachment of the 5S RNA into the large ribosomal subunit, where it forms part of the central protuberance. The protein is Large ribosomal subunit protein uL18 of Corynebacterium glutamicum (strain ATCC 13032 / DSM 20300 / JCM 1318 / BCRC 11384 / CCUG 27702 / LMG 3730 / NBRC 12168 / NCIMB 10025 / NRRL B-2784 / 534).